Consider the following 3574-residue polypeptide: Chromatin structure-remodeling complex protein SYD (3574 aa).

3 disordered regions span residues 76–105, 123–211, and 328–372; these read SCLP…GVSN, TSGR…KIDD, and DPKG…TERS. Polar residues-rich tracts occupy residues 124–148 and 155–168; these read SGRQ…QSNR and PSNL…SQPH. The span at 169–181 shows a compositional bias: basic and acidic residues; sequence NRSETMNQRDVKS. Over residues 194-204 the composition is skewed to polar residues; sequence WDQNMDNSQIF. Residues 358 to 372 show a composition bias toward basic and acidic residues; it reads RLDEMDFSSKETERS. Residues 573–647 enclose the HSA domain; it reads QKMKEERQRR…QREKINLLKI (75 aa). The Helicase ATP-binding domain maps to 766–933; the sequence is VSLYNNHLNG…WALLNFLLPN (168 aa). Position 779–786 (779–786) interacts with ATP; that stretch reads DEMGLGKT. A DEAH box motif is present at residues 884-887; the sequence is DEGH. The 147-residue stretch at 1077 to 1223 folds into the Helicase C-terminal domain; the sequence is MLDRMLPKLK…KLGVANQSIT (147 aa). Residues 1266 to 1273 carry the Nuclear localization signal motif; that stretch reads ARRESEID. Disordered stretches follow at residues 1342–1472, 1500–1575, 1588–1637, 1690–1811, 1830–1868, 2040–2068, 2089–2115, 2143–2162, 2179–2220, 2235–2338, 2350–2451, 2517–2538, 2684–2703, 2718–2759, 2865–2884, 3017–3045, 3189–3208, 3316–3337, and 3512–3574; these read KRKD…VSRT, HPTS…SDAE, IVSR…SGSH, GPVQ…QIEV, QPHF…QTAD, SSLS…LEKN, SSEE…TDEV, SSML…HSSI, LDDK…QMED, EEKE…DTND, EEKE…HMED, FESE…EVSE, SEEI…QPDD, IDIG…RDSR, DTEK…LHQL, EGTD…PSSS, NADS…VVEK, VDDS…AEPM, and TEDT…NEDV. The span at 1362 to 1371 shows a compositional bias: basic and acidic residues; it reads AREVRSYEEK. Composition is skewed to polar residues over residues 1399–1426 and 1500–1511; these read SLAN…QAIT and HPTSSLALTSPD. The span at 1532–1546 shows a compositional bias: basic residues; the sequence is GRGRGRSRGRGAGRG. 2 stretches are compositionally biased toward polar residues: residues 1555–1571 and 1597–1614; these read GSNS…TSLA and EGST…SATT. Over residues 1617–1627 the composition is skewed to basic and acidic residues; that stretch reads RSDKAADKDLD. 6 stretches are compositionally biased toward polar residues: residues 1690-1699, 1706-1752, 1796-1806, 1832-1849, 2040-2057, and 2090-2110; these read GPVQNQNAVS, KSPS…STVE, DASSARSTGLT, HFSQ…SLSQ, SSLS…STTA, and SEEQ…LQAS. The segment covering 2248–2260 has biased composition (acidic residues); it reads DDADTEQDPEESV. Positions 2438–2451 are enriched in basic and acidic residues; that stretch reads DRPKDGTADTHMED. A compositionally biased stretch (polar residues) spans 2718–2735; it reads IDIGITSGKTCQPSSSTQ. Polar residues-rich tracts occupy residues 3034–3045 and 3191–3204; these read KSQLADTEPSSS and DSQL…SSPS. The span at 3523–3538 shows a compositional bias: basic and acidic residues; that stretch reads KTEEKDAENPSDRLDG.

Belongs to the SNF2/RAD54 helicase family. As to quaternary structure, interacts with LFY. Binds to BARD1/ROW1. Post-translationally, phosphorylated. Mostly expressed in rapidly dividing cells in the vegetative, inflorescence, and root meristems, as well as in young leaf and flower primordia. Isoform 1 is predominantly found in seedlings whereas isoform 2 is present in both seedlings and inflorescences (at protein level).

Its subcellular location is the cytoplasm. It localises to the nucleus. In terms of biological role, catalytic component of the chromatin structure-remodeling complex (RSC), which is involved in transcription regulation and nucleosome positioning. Controls stem cell fate via the transcription regulation of WUS in the shoot apical meristem, by modulating its promoter. LFY-dependent repressor of the meristem identity switch from vegetative to reproductive development probably by modulating chromatin state. Involved in the regulation of floral homeotic gene expression in response to environmental stimuli. Required for carpel and ovule development, and for cotyledon separation via the regulation of CUC2 transcription. Regulates the promoters of several genes downstream of the jasmonate (JA) and ethylene (ET) signaling pathways. Required for resistance against the necrotrophic pathogen B.cinerea but not the biotrophic pathogen P.syringae. This chain is Chromatin structure-remodeling complex protein SYD (SYD), found in Arabidopsis thaliana (Mouse-ear cress).